A 212-amino-acid chain; its full sequence is Transmembrane emp24 domain-containing protein p24delta7 (212 aa).

The N-terminal stretch at 1–22 (MNHRRSSIVLLILSILSPVTLS) is a signal peptide. At 23–179 (IRYELLSGHT…HNLNIATNSK (157 aa)) the chain is on the lumenal side. Positions 32-147 (TKCISEEIHA…VETMEFEVKK (116 aa)) constitute a GOLD domain. Residues 162–175 (LRDREEEMHNLNIA) are a coiled coil. Residue arginine 165 is modified to Omega-N-methylated arginine. A helical transmembrane segment spans residues 180–200 (MAWLSFVSLAVCLSVAGLQFW). The Cytoplasmic portion of the chain corresponds to 201-212 (HLKTFFQKKKLI). A COPII vesicle coat-binding motif is present at residues 205 to 206 (FF). A COPI vesicle coat-binding motif is present at residues 205-212 (FFQKKKLI).

Belongs to the EMP24/GP25L family. Probably oligomerizes with other members of the EMP24/GP25L family. Associates with the COPI vesicle coat (coatomer). Associates with the COPII vesicle coat (coatomer).

The protein resides in the endoplasmic reticulum membrane. Its subcellular location is the golgi apparatus. It is found in the cis-Golgi network membrane. It localises to the golgi stack membrane. In terms of biological role, involved in vesicular protein trafficking. Mainly functions in the early secretory pathway. Thought to act as cargo receptor at the lumenal side for incorporation of secretory cargo molecules into transport vesicles and to be involved in vesicle coat formation at the cytoplasmic side. This Arabidopsis thaliana (Mouse-ear cress) protein is Transmembrane emp24 domain-containing protein p24delta7.